A 154-amino-acid chain; its full sequence is 6,7-dimethyl-8-ribityllumazine synthase (154 aa).

Residues phenylalanine 23, 57 to 59 (AFE), and 81 to 83 (AVI) contribute to the 5-amino-6-(D-ribitylamino)uracil site. Residue 86–87 (ST) participates in (2S)-2-hydroxy-3-oxobutyl phosphate binding. The Proton donor role is filled by histidine 89. 5-amino-6-(D-ribitylamino)uracil is bound at residue phenylalanine 114. Arginine 128 serves as a coordination point for (2S)-2-hydroxy-3-oxobutyl phosphate.

This sequence belongs to the DMRL synthase family.

The catalysed reaction is (2S)-2-hydroxy-3-oxobutyl phosphate + 5-amino-6-(D-ribitylamino)uracil = 6,7-dimethyl-8-(1-D-ribityl)lumazine + phosphate + 2 H2O + H(+). Its pathway is cofactor biosynthesis; riboflavin biosynthesis; riboflavin from 2-hydroxy-3-oxobutyl phosphate and 5-amino-6-(D-ribitylamino)uracil: step 1/2. Its function is as follows. Catalyzes the formation of 6,7-dimethyl-8-ribityllumazine by condensation of 5-amino-6-(D-ribitylamino)uracil with 3,4-dihydroxy-2-butanone 4-phosphate. This is the penultimate step in the biosynthesis of riboflavin. This Campylobacter jejuni subsp. doylei (strain ATCC BAA-1458 / RM4099 / 269.97) protein is 6,7-dimethyl-8-ribityllumazine synthase.